The primary structure comprises 379 residues: Homoserine O-succinyltransferase (379 aa).

The AB hydrolase-1 domain maps to 51-360 (NAVLICHALS…DAPQGHDAFL (310 aa)). The Nucleophile role is filled by Ser-157. Arg-227 contributes to the substrate binding site. Catalysis depends on residues Asp-323 and His-356. Asp-357 contributes to the substrate binding site.

It belongs to the AB hydrolase superfamily. MetX family. As to quaternary structure, homodimer.

Its subcellular location is the cytoplasm. The catalysed reaction is L-homoserine + succinyl-CoA = O-succinyl-L-homoserine + CoA. Its pathway is amino-acid biosynthesis; L-methionine biosynthesis via de novo pathway; O-succinyl-L-homoserine from L-homoserine: step 1/1. Its function is as follows. Transfers a succinyl group from succinyl-CoA to L-homoserine, forming succinyl-L-homoserine. The sequence is that of Homoserine O-succinyltransferase from Pseudomonas savastanoi pv. phaseolicola (strain 1448A / Race 6) (Pseudomonas syringae pv. phaseolicola (strain 1448A / Race 6)).